A 315-amino-acid polypeptide reads, in one-letter code: Protein OPG185 (315 aa).

The signal sequence occupies residues 1 to 16 (MARLPILLLLISLVYS). The Ig-like V-type domain maps to 17-121 (TPSPQTSKKI…NDTDKVDYEE (105 aa)). Over 17 to 279 (TPSPQTSKKI…SNYKTKDFVE (263 aa)) the chain is Virion surface. A disulfide bond links cysteine 34 and cysteine 103. 4 N-linked (GlcNAc...) asparagine; by host glycosylation sites follow: asparagine 37, asparagine 69, asparagine 112, and asparagine 161. The span at 192 to 202 (INTVSASSGES) shows a compositional bias: polar residues. The interval 192 to 214 (INTVSASSGESTTDETPEPITDK) is disordered. Asparagine 254 is a glycosylation site (N-linked (GlcNAc...) asparagine; by host). A helical membrane pass occupies residues 280 to 303 (IFGITALIILSAVAIFCITYYIYN). Topologically, residues 304-315 (KRSRKYKTENKV) are intravirion.

This sequence belongs to the orthopoxvirus OPG185 family. As to quaternary structure, heterodimerizes with OPG040. The heterodimer OPG185-OPG040 interacts with components of the entry fusion complex OPG143 and OPG094. Heterodimer with C3/VPC protein; disulfide-linked. Glycosylated; contains phosphate and sulfate-substituted glycans. O-glycosylation is required for hemagglutination and hemadsorption activities of infected cell membranes.

It is found in the virion membrane. The protein localises to the host membrane. In terms of biological role, prevents cell to cell fusion by interacting with and directing the viral OPG040 protein on the host plasma membrane. The OPG185-OPG040 complex associates with components of the entry fusion complex (EFC) presumably to avoid superinfection and syncytium formation. Via its interaction with C3/VCP protein, protects the infected cell and probably also the extracellular enveloped virus from complement attack. This Vaccinia virus (strain Tian Tan) (VACV) protein is Protein OPG185 (OPG185).